Consider the following 104-residue polypeptide: Small integral membrane protein 19 (104 aa).

Residues 20–42 (AWNEATNVYLLVILVSFALLMYA) traverse the membrane as a helical segment.

Belongs to the SMIM19 family.

It is found in the membrane. The chain is Small integral membrane protein 19 (smim19) from Danio rerio (Zebrafish).